A 344-amino-acid polypeptide reads, in one-letter code: uncharacterized protein (344 aa).

Residues 304–344 are disordered; the sequence is AVPAPTPRRPLDSVLQIRQTPEKGRNASDRNARETGWFSPP. The segment covering 323–336 has biased composition (basic and acidic residues); the sequence is TPEKGRNASDRNAR.

This is an uncharacterized protein from Mycobacterium tuberculosis (strain CDC 1551 / Oshkosh).